Here is a 456-residue protein sequence, read N- to C-terminus: Bifunctional protein GlmU (456 aa).

A pyrophosphorylase region spans residues 1 to 229 (MLNNAMSVVI…LSEVEGVNNR (229 aa)). UDP-N-acetyl-alpha-D-glucosamine-binding positions include 11–14 (LAAG), Lys25, Gln76, 81–82 (GT), 103–105 (YGD), Gly140, Glu154, Asn169, and Asn227. Asp105 serves as a coordination point for Mg(2+). Asn227 contributes to the Mg(2+) binding site. The linker stretch occupies residues 230–250 (LQLSRLERVYQSEQAEKLLLA). Residues 251 to 456 (GVMLRDPARF…EGWRRPVKKK (206 aa)) form an N-acetyltransferase region. UDP-N-acetyl-alpha-D-glucosamine is bound by residues Arg333 and Lys351. His363 acts as the Proton acceptor in catalysis. 2 residues coordinate UDP-N-acetyl-alpha-D-glucosamine: Tyr366 and Asn377. Residues Ala380, 386–387 (NY), Ser405, Ala423, and Arg440 each bind acetyl-CoA.

In the N-terminal section; belongs to the N-acetylglucosamine-1-phosphate uridyltransferase family. The protein in the C-terminal section; belongs to the transferase hexapeptide repeat family. Homotrimer. It depends on Mg(2+) as a cofactor.

Its subcellular location is the cytoplasm. The enzyme catalyses alpha-D-glucosamine 1-phosphate + acetyl-CoA = N-acetyl-alpha-D-glucosamine 1-phosphate + CoA + H(+). It carries out the reaction N-acetyl-alpha-D-glucosamine 1-phosphate + UTP + H(+) = UDP-N-acetyl-alpha-D-glucosamine + diphosphate. It functions in the pathway nucleotide-sugar biosynthesis; UDP-N-acetyl-alpha-D-glucosamine biosynthesis; N-acetyl-alpha-D-glucosamine 1-phosphate from alpha-D-glucosamine 6-phosphate (route II): step 2/2. The protein operates within nucleotide-sugar biosynthesis; UDP-N-acetyl-alpha-D-glucosamine biosynthesis; UDP-N-acetyl-alpha-D-glucosamine from N-acetyl-alpha-D-glucosamine 1-phosphate: step 1/1. It participates in bacterial outer membrane biogenesis; LPS lipid A biosynthesis. Catalyzes the last two sequential reactions in the de novo biosynthetic pathway for UDP-N-acetylglucosamine (UDP-GlcNAc). The C-terminal domain catalyzes the transfer of acetyl group from acetyl coenzyme A to glucosamine-1-phosphate (GlcN-1-P) to produce N-acetylglucosamine-1-phosphate (GlcNAc-1-P), which is converted into UDP-GlcNAc by the transfer of uridine 5-monophosphate (from uridine 5-triphosphate), a reaction catalyzed by the N-terminal domain. The polypeptide is Bifunctional protein GlmU (Escherichia coli (strain 55989 / EAEC)).